The primary structure comprises 1209 residues: MMRLARFTQGFSFNKNVAKHRGSGSSNGTGNGSGTGNGQGLGGSCSANGLAATGGVGGGGGSGSGGGGCGSGSGSGSGKRKSKARTKCFGGTVFRCCLPCRGGGSAAPATSPPQTPAQTPDELKVIPEDCNLEKSAEQKRDLLERNNKEDDLLNRTVSGSELDLYGGAGGGTKKHSLADTIDTSVTTPISLKTLINDVDEELDQQLSAADIAAASLASGLVARRAEPETLSDASVSPTAVVQQQQQQQQQLQQPLLQSQPHFVPSSGNILSQVTLYSGSNPSTNPCQSAVQNQGQNSNPNPNQNPNTNPNQNQQRCSCQPQTSPLPHIKEEEESDQANFKHQTSLKEHQPLPPPITIATGYCGSCESVHHSSATSSSAGTVPPGGQQTQEYIAGTSSTPSPRIKLKFRKPHKSCWSRIVLAPIGSAGGSSSATTVIGSNSNETLASSSTTGGTATTTQNSSSVSVAAHHRLTSSSASALATSHPSNSQLLPTSKMQAEQGSIGDLQKYHSRYLKNRRHTLANVRFDVENGQGARSPLEGGSPSAGLVLQNLPQRRESFLYRSDSDFEMSPKSMSRNSSIASERFKEQEASILVDRSHGEDLIVTPFAQILASLRSVRNNLLSLTNVPASNKSRRPNQSSSASRSGNPPGAPLSQGEEAYTRLATDTIEELDWCLDQLETIQTHRSVSDMASLKFKRMLNKELSHFSESSRSGNQISEYICSTFLDKQQEFDLPSLRVEDNPELVAANAAAGQQSAGQYARSRSPRGPPMSQISGVKRPLSHTNSFTGERLPTFGVETPRENELGTLLGELDTWGIQIFSIGEFSVNRPLTCVAYTIFQSRELLTSLMIPPKTFLNFMSTLEDHYVKDNPFHNSLHAADVTQSTNVLLNTPALEGVFTPLEVGGALFAACIHDVDHPGLTNQFLVNSSSELALMYNDESVLENHHLAVAFKLLQNQGCDIFCNMQKKQRQTLRKMVIDIVLSTDMSKHMSLLADLKTMVETKKVAGSGVLLLDNYTDRIQVLENLVHCADLSNPTKPLPLYKRWVALLMEEFFLQGDKERESGMDISPMCDRHNATIEKSQVGFIDYIVHPLWETWADLVHPDAQDILDTLEENRDYYQSMIPPSPPPSGVDENPQEDRIRFQVTLEESDQENLAELEEGDESGGESTTTGTTGTTAASALSGAGGGGGGGGGMAPRTGGCQNQPQHGGM.

Disordered regions lie at residues 16–35 (NVAK…GSGT), 59–82 (GGGS…KRKS), 275–353 (LYSG…PLPP), 372–403 (SATS…SPRI), 442–498 (ETLA…MQAE), 626–655 (VPAS…LSQG), and 754–792 (SAGQ…RLPT). Gly residues-rich tracts occupy residues 25 to 35 (SSNGTGNGSGT) and 59 to 77 (GGGS…GSGS). Polar residues predominate over residues 275–290 (LYSGSNPSTNPCQSAV). Low complexity predominate over residues 291–314 (QNQGQNSNPNPNQNPNTNPNQNQQ). The span at 315–324 (RCSCQPQTSP) shows a compositional bias: polar residues. The segment covering 372–383 (SATSSSAGTVPP) has biased composition (low complexity). A compositionally biased stretch (polar residues) spans 385–400 (GQQTQEYIAGTSSTPS). Composition is skewed to low complexity over residues 445 to 462 (ASSS…NSSS) and 472 to 483 (TSSSASALATSH). 2 stretches are compositionally biased toward polar residues: residues 484-498 (PSNS…MQAE) and 627-645 (PASN…SRSG). Positions 795–1124 (VETPRENELG…DYYQSMIPPS (330 aa)) constitute a PDEase domain. The active-site Proton donor is H871. Residue 871-875 (HNSLH) participates in 3',5'-cyclic AMP binding. A divalent metal cation-binding residues include H875, H911, D912, and D1029. The 3',5'-cyclic AMP site is built by D912, D1029, and Q1080. The span at 1146 to 1163 (EESDQENLAELEEGDESG) shows a compositional bias: acidic residues. Residues 1146 to 1209 (EESDQENLAE…CQNQPQHGGM (64 aa)) are disordered. Positions 1164–1181 (GESTTTGTTGTTAASALS) are enriched in low complexity. Positions 1182 to 1193 (GAGGGGGGGGGM) are enriched in gly residues. The span at 1199-1209 (GCQNQPQHGGM) shows a compositional bias: polar residues.

This sequence belongs to the cyclic nucleotide phosphodiesterase family. PDE4 subfamily. As to quaternary structure, monomer. A divalent metal cation is required as a cofactor.

It catalyses the reaction 3',5'-cyclic AMP + H2O = AMP + H(+). It participates in purine metabolism; 3',5'-cyclic AMP degradation; AMP from 3',5'-cyclic AMP: step 1/1. In terms of biological role, hydrolyzes the second messenger cAMP, which is a key regulator of many important physiological processes. Vital for female fertility. Required for learning/memory. The chain is 3',5'-cyclic-AMP phosphodiesterase, isoform I from Drosophila melanogaster (Fruit fly).